The sequence spans 173 residues: Glutamyl-tRNA(Gln) amidotransferase subunit C-1, mitochondrial (173 aa).

The transit peptide at 1-23 directs the protein to the mitochondrion; sequence MIRIPFRLRPPPGRTLHSLVRTF. Positions 51 to 70 are disordered; that stretch reads PSKVPQRPHKSTTTVGQSTP. Residues 61 to 70 show a composition bias toward polar residues; sequence STTTVGQSTP.

This sequence belongs to the GatC family. Subunit of the heterotrimeric GatCAB amidotransferase (AdT) complex, composed of A, B and C subunits.

It is found in the mitochondrion. The catalysed reaction is L-glutamyl-tRNA(Gln) + L-glutamine + ATP + H2O = L-glutaminyl-tRNA(Gln) + L-glutamate + ADP + phosphate + H(+). Its function is as follows. Allows the formation of correctly charged Gln-tRNA(Gln) through the transamidation of misacylated Glu-tRNA(Gln) in the mitochondria. The reaction takes place in the presence of glutamine and ATP through an activated gamma-phospho-Glu-tRNA(Gln). The protein is Glutamyl-tRNA(Gln) amidotransferase subunit C-1, mitochondrial of Culex quinquefasciatus (Southern house mosquito).